Consider the following 261-residue polypeptide: Phosphonates import ATP-binding protein PhnC (261 aa).

Positions 9 to 253 constitute an ABC transporter domain; that stretch reads IQLKDVSKIY…VFDDIYNGGN (245 aa). Position 42–49 (42–49) interacts with ATP; it reads GLSGAGKS.

It belongs to the ABC transporter superfamily. Phosphonates importer (TC 3.A.1.9.1) family. As to quaternary structure, the complex is composed of two ATP-binding proteins (PhnC), two transmembrane proteins (PhnE) and a solute-binding protein (PhnD).

It localises to the cell membrane. The catalysed reaction is phosphonate(out) + ATP + H2O = phosphonate(in) + ADP + phosphate + H(+). Functionally, part of the ABC transporter complex PhnCDE involved in phosphonates import. Responsible for energy coupling to the transport system. The sequence is that of Phosphonates import ATP-binding protein PhnC from Lactobacillus gasseri (strain ATCC 33323 / DSM 20243 / BCRC 14619 / CIP 102991 / JCM 1131 / KCTC 3163 / NCIMB 11718 / NCTC 13722 / AM63).